The following is a 227-amino-acid chain: Protein M1425_1941 (227 aa).

In terms of domain architecture, AMMECR1 spans 15–209 (EIGRFLIEIA…ETRPDGSDII (195 aa)).

This is Protein M1425_1941 from Saccharolobus islandicus (strain M.14.25 / Kamchatka #1) (Sulfolobus islandicus).